A 722-amino-acid polypeptide reads, in one-letter code: A-type ATP synthase subunit I (722 aa).

Basic and acidic residues predominate over residues 309–321 (DYKPTGHDQHVPA). The interval 309–352 (DYKPTGHDQHVPADDGADAATDGGTTASFDETDSPPVIQDNPGP) is disordered. Over residues 326–335 (DAATDGGTTA) the composition is skewed to low complexity. 8 consecutive transmembrane segments (helical) span residues 384–404 (FYGF…LGFW), 419–439 (GVAM…GEVF), 474–494 (LAAS…FGFV), 505–525 (AALE…WLFS), 554–574 (LAAA…AGFL), 590–610 (IAAV…LVFG), 639–659 (FMLF…MHMG), and 662–682 (GILI…ALGV).

The protein belongs to the V-ATPase 116 kDa subunit family. As to quaternary structure, has multiple subunits with at least A(3), B(3), C, D, E, F, H, I and proteolipid K(x).

The protein localises to the cell membrane. In terms of biological role, component of the A-type ATP synthase that produces ATP from ADP in the presence of a proton gradient across the membrane. The polypeptide is A-type ATP synthase subunit I (Halobacterium salinarum (strain ATCC 700922 / JCM 11081 / NRC-1) (Halobacterium halobium)).